The following is a 594-amino-acid chain: Golgi-associated RAB2 interactor protein 4 (594 aa).

Positions 387 to 524 (MDAAAGPPVS…TSSGSSKGLG (138 aa)) are disordered. The span at 396 to 406 (STRQSKSSLSG) shows a compositional bias: polar residues. Basic and acidic residues-rich tracts occupy residues 408 to 433 (HGRERTQASAEGCKEGRERREKDRAL), 442 to 455 (TGESRHKTRGDKIA), and 468 to 477 (ANRDDKKEKG). Residues 511–520 (SLWTTSSGSS) show a composition bias toward polar residues.

This sequence belongs to the GARIN family. As to quaternary structure, interacts (via N-terminus) with RAB2B (in GTP-bound form).

The protein resides in the golgi apparatus. In terms of biological role, RAB2B effector protein required for the compacted Golgi morphology, probably through interaction with small GTPase RAB2B. This is Golgi-associated RAB2 interactor protein 4 from Homo sapiens (Human).